Here is a 234-residue protein sequence, read N- to C-terminus: ATP synthase subunit delta, chloroplastic (234 aa).

The N-terminal 47 residues, Met-1–Met-47, are a transit peptide targeting the chloroplast. Ser-48 bears the N-acetylserine mark. The N-linked (GlcNAc...) asparagine glycan is linked to Asn-66. The residue at position 234 (Thr-234) is a Phosphothreonine.

The protein belongs to the ATPase delta chain family. F-type ATPases have 2 components, F(1) - the catalytic core - and F(0) - the membrane proton channel. F(1) has five subunits: alpha(3), beta(3), gamma(1), delta(1), epsilon(1). CF(0) has four main subunits: a(1), b(1), b'(1) and c(10-14). The alpha and beta chains form an alternating ring which encloses part of the gamma chain. F(1) is attached to F(0) by a central stalk formed by the gamma and epsilon chains, while a peripheral stalk is formed by the delta, b and b' chains.

The protein resides in the plastid. Its subcellular location is the chloroplast thylakoid membrane. Its function is as follows. F(1)F(0) ATP synthase produces ATP from ADP in the presence of a proton or sodium gradient. F-type ATPases consist of two structural domains, F(1) containing the extramembraneous catalytic core and F(0) containing the membrane proton channel, linked together by a central stalk and a peripheral stalk. During catalysis, ATP synthesis in the catalytic domain of F(1) is coupled via a rotary mechanism of the central stalk subunits to proton translocation (Potential). Essential for photosynthesis, probably by facilitating electron transport in both photosystems I and II. Functionally, this protein is part of the stalk that links CF(0) to CF(1). It either transmits conformational changes from CF(0) to CF(1) or is implicated in proton conduction. The protein is ATP synthase subunit delta, chloroplastic of Arabidopsis thaliana (Mouse-ear cress).